The following is a 62-amino-acid chain: Short neurotoxin 2 (62 aa).

Residues methionine 1–glycine 20 are disordered. 4 disulfides stabilise this stretch: cysteine 3-cysteine 24, cysteine 17-cysteine 41, cysteine 43-cysteine 54, and cysteine 55-cysteine 60.

The protein belongs to the three-finger toxin family. Short-chain subfamily. Type I alpha-neurotoxin sub-subfamily. As to expression, expressed by the venom gland.

The protein resides in the secreted. In terms of biological role, binds to muscle nicotinic acetylcholine receptor (nAChR) and inhibit acetylcholine from binding to the receptor, thereby impairing neuromuscular transmission. In Oxyuranus scutellatus scutellatus (Australian taipan), this protein is Short neurotoxin 2.